A 183-amino-acid chain; its full sequence is Endoribonuclease YbeY (183 aa).

H118, H122, and H128 together coordinate Zn(2+). Residues 156–183 (EREQAQRSADSAVLGAVGLEEQDGPGTH) are disordered.

This sequence belongs to the endoribonuclease YbeY family. The cofactor is Zn(2+).

The protein localises to the cytoplasm. Its function is as follows. Single strand-specific metallo-endoribonuclease involved in late-stage 70S ribosome quality control and in maturation of the 3' terminus of the 16S rRNA. The chain is Endoribonuclease YbeY from Saccharopolyspora erythraea (strain ATCC 11635 / DSM 40517 / JCM 4748 / NBRC 13426 / NCIMB 8594 / NRRL 2338).